The chain runs to 165 residues: Large ribosomal subunit protein uL10 (165 aa).

The protein belongs to the universal ribosomal protein uL10 family. In terms of assembly, part of the ribosomal stalk of the 50S ribosomal subunit. The N-terminus interacts with L11 and the large rRNA to form the base of the stalk. The C-terminus forms an elongated spine to which L12 dimers bind in a sequential fashion forming a multimeric L10(L12)X complex.

Forms part of the ribosomal stalk, playing a central role in the interaction of the ribosome with GTP-bound translation factors. This Mycoplasma mycoides subsp. mycoides SC (strain CCUG 32753 / NCTC 10114 / PG1) protein is Large ribosomal subunit protein uL10.